The following is a 189-amino-acid chain: Elongation factor P (189 aa).

The residue at position 34 (K34) is an N6-(3,6-diaminohexanoyl)-5-hydroxylysine.

Belongs to the elongation factor P family. Post-translationally, may be beta-lysylated on the epsilon-amino group of Lys-34 by the combined action of EpmA and EpmB, and then hydroxylated on the C5 position of the same residue by EpmC (if this protein is present). Lysylation is critical for the stimulatory effect of EF-P on peptide-bond formation. The lysylation moiety may extend toward the peptidyltransferase center and stabilize the terminal 3-CCA end of the tRNA. Hydroxylation of the C5 position on Lys-34 may allow additional potential stabilizing hydrogen-bond interactions with the P-tRNA.

It localises to the cytoplasm. It functions in the pathway protein biosynthesis; polypeptide chain elongation. In terms of biological role, involved in peptide bond synthesis. Alleviates ribosome stalling that occurs when 3 or more consecutive Pro residues or the sequence PPG is present in a protein, possibly by augmenting the peptidyl transferase activity of the ribosome. Modification of Lys-34 is required for alleviation. The sequence is that of Elongation factor P from Saccharophagus degradans (strain 2-40 / ATCC 43961 / DSM 17024).